Here is a 234-residue protein sequence, read N- to C-terminus: uncharacterized protein (234 aa).

The interval 1–23 (MVDQIRSPSWKSGFPSHQHQQGS) is disordered.

This is an uncharacterized protein from Caenorhabditis elegans.